The primary structure comprises 346 residues: Peroxidase 37 (346 aa).

An N-terminal signal peptide occupies residues 1–22 (MHSSLIKLGFLLLLIQVSLSHA). Gln-23 carries the pyrrolidone carboxylic acid modification. Intrachain disulfides connect Cys-33-Cys-113, Cys-66-Cys-71, Cys-119-Cys-323, and Cys-199-Cys-231. His-64 serves as the catalytic Proton acceptor. Residues Asp-65, Val-68, Gly-70, Asp-72, and Ser-74 each coordinate Ca(2+). A glycan (N-linked (GlcNAc...) asparagine) is linked at Asn-79. Pro-161 is a substrate binding site. His-192 contacts heme b. Thr-193 lines the Ca(2+) pocket. 2 N-linked (GlcNAc...) asparagine glycosylation sites follow: Asn-208 and Asn-236. Asp-244, Thr-247, and Asp-252 together coordinate Ca(2+).

Belongs to the peroxidase family. Classical plant (class III) peroxidase subfamily. Heme b serves as cofactor. The cofactor is Ca(2+).

Its subcellular location is the secreted. The protein localises to the vacuole. It catalyses the reaction 2 a phenolic donor + H2O2 = 2 a phenolic radical donor + 2 H2O. Functionally, removal of H(2)O(2), oxidation of toxic reductants, biosynthesis and degradation of lignin, suberization, auxin catabolism, response to environmental stresses such as wounding, pathogen attack and oxidative stress. These functions might be dependent on each isozyme/isoform in each plant tissue. The protein is Peroxidase 37 (PER37) of Arabidopsis thaliana (Mouse-ear cress).